The chain runs to 674 residues: UvrABC system protein C (674 aa).

The GIY-YIG domain maps to 16–95 (TNPGVYRFRD…IKEFKPRFNV (80 aa)). The 36-residue stretch at 207 to 242 (KRFTNKLEKQMAAAVARLDYEQAARIRDDITALRKV) folds into the UVR domain.

This sequence belongs to the UvrC family. As to quaternary structure, interacts with UvrB in an incision complex.

It localises to the cytoplasm. The UvrABC repair system catalyzes the recognition and processing of DNA lesions. UvrC both incises the 5' and 3' sides of the lesion. The N-terminal half is responsible for the 3' incision and the C-terminal half is responsible for the 5' incision. This is UvrABC system protein C from Pseudarthrobacter chlorophenolicus (strain ATCC 700700 / DSM 12829 / CIP 107037 / JCM 12360 / KCTC 9906 / NCIMB 13794 / A6) (Arthrobacter chlorophenolicus).